A 342-amino-acid chain; its full sequence is L-threonine 3-dehydrogenase (342 aa).

Cys38 lines the Zn(2+) pocket. Residues Thr40 and His43 each act as charge relay system in the active site. His63, Glu64, Cys93, Cys96, Cys99, and Cys107 together coordinate Zn(2+). Residues Ile175, Asp195, Arg200, 262–264, and 286–287 each bind NAD(+); these read LGI and IY.

This sequence belongs to the zinc-containing alcohol dehydrogenase family. In terms of assembly, homotetramer. Requires Zn(2+) as cofactor.

The protein resides in the cytoplasm. The catalysed reaction is L-threonine + NAD(+) = (2S)-2-amino-3-oxobutanoate + NADH + H(+). Its pathway is amino-acid degradation; L-threonine degradation via oxydo-reductase pathway; glycine from L-threonine: step 1/2. In terms of biological role, catalyzes the NAD(+)-dependent oxidation of L-threonine to 2-amino-3-ketobutyrate. The sequence is that of L-threonine 3-dehydrogenase from Burkholderia ambifaria (strain MC40-6).